Here is a 618-residue protein sequence, read N- to C-terminus: Dihydroxy-acid dehydratase (618 aa).

Aspartate 81 provides a ligand contact to Mg(2+). Cysteine 122 contributes to the [2Fe-2S] cluster binding site. Mg(2+) is bound by residues aspartate 123 and lysine 124. Lysine 124 bears the N6-carboxylysine mark. Residue cysteine 195 participates in [2Fe-2S] cluster binding. Glutamate 491 contributes to the Mg(2+) binding site. Serine 517 functions as the Proton acceptor in the catalytic mechanism.

The protein belongs to the IlvD/Edd family. Homodimer. [2Fe-2S] cluster serves as cofactor. Mg(2+) is required as a cofactor.

The catalysed reaction is (2R)-2,3-dihydroxy-3-methylbutanoate = 3-methyl-2-oxobutanoate + H2O. It catalyses the reaction (2R,3R)-2,3-dihydroxy-3-methylpentanoate = (S)-3-methyl-2-oxopentanoate + H2O. It participates in amino-acid biosynthesis; L-isoleucine biosynthesis; L-isoleucine from 2-oxobutanoate: step 3/4. It functions in the pathway amino-acid biosynthesis; L-valine biosynthesis; L-valine from pyruvate: step 3/4. In terms of biological role, functions in the biosynthesis of branched-chain amino acids. Catalyzes the dehydration of (2R,3R)-2,3-dihydroxy-3-methylpentanoate (2,3-dihydroxy-3-methylvalerate) into 2-oxo-3-methylpentanoate (2-oxo-3-methylvalerate) and of (2R)-2,3-dihydroxy-3-methylbutanoate (2,3-dihydroxyisovalerate) into 2-oxo-3-methylbutanoate (2-oxoisovalerate), the penultimate precursor to L-isoleucine and L-valine, respectively. The polypeptide is Dihydroxy-acid dehydratase (Rhodopseudomonas palustris (strain ATCC BAA-98 / CGA009)).